Reading from the N-terminus, the 568-residue chain is Zinc finger protein 583 (568 aa).

The KRAB domain occupies 6 to 77 (LTFEDVSVNF…QKKGARDTCP (72 aa)). 12 C2H2-type zinc fingers span residues 211–233 (LKCSECEKVFNQTSSLTLHQRIH), 239–261 (YACVECGKAFSQSANLAQHKRIH), 267–289 (YECKECRKAFSQNAHLAQHQRVH), 295–317 (YQCKECKKAFSQIAHLTQHQRIH), 323–345 (FECIECGKAFSNGSFLAQHQRIH), 351–373 (YVCHVCGKAFSHRGYLIVHQRIH), 379–401 (YECKECRKSFSQYAHLSQHQRVH), 407–429 (YECKVCRKAFSQVAYLDQHQRVH), 435–457 (YECAECRKAFSNSSSLAQHQRSH), 463–485 (YICKECRKTFSQNAGLAQHQRIH), 491–513 (YECNICGKAFSYSGSLTLHQRIH), and 519–541 (YECKDCRKSFRQRAHLAHHEKVH).

It belongs to the krueppel C2H2-type zinc-finger protein family.

The protein resides in the nucleus. In terms of biological role, may be involved in transcriptional regulation. In Mus musculus (Mouse), this protein is Zinc finger protein 583 (Znf583).